The following is a 213-amino-acid chain: Cell division protein SepF (213 aa).

A disordered region spans residues 27–103 (VDAPAPRRAP…GSLRGSAPTR (77 aa)). Composition is skewed to basic and acidic residues over residues 35-51 (APVE…RFAD) and 72-90 (DEDR…DRPA).

This sequence belongs to the SepF family. Homodimer. Interacts with FtsZ.

The protein localises to the cytoplasm. In terms of biological role, cell division protein that is part of the divisome complex and is recruited early to the Z-ring. Probably stimulates Z-ring formation, perhaps through the cross-linking of FtsZ protofilaments. Its function overlaps with FtsA. The polypeptide is Cell division protein SepF (Mycobacteroides abscessus (strain ATCC 19977 / DSM 44196 / CCUG 20993 / CIP 104536 / JCM 13569 / NCTC 13031 / TMC 1543 / L948) (Mycobacterium abscessus)).